Here is a 241-residue protein sequence, read N- to C-terminus: Small ribosomal subunit protein uS2 (241 aa).

It belongs to the universal ribosomal protein uS2 family.

This chain is Small ribosomal subunit protein uS2, found in Proteus mirabilis (strain HI4320).